The following is an 87-amino-acid chain: Small ribosomal subunit protein bS20 (87 aa).

The tract at residues 1 to 26 is disordered; the sequence is MANIKSAKKRAIQSEKRRKHNASRRS.

This sequence belongs to the bacterial ribosomal protein bS20 family.

Binds directly to 16S ribosomal RNA. This chain is Small ribosomal subunit protein bS20, found in Photorhabdus laumondii subsp. laumondii (strain DSM 15139 / CIP 105565 / TT01) (Photorhabdus luminescens subsp. laumondii).